Consider the following 417-residue polypeptide: Serine hydroxymethyltransferase 2 (417 aa).

Residues Leu-121 and 125-127 (GHL) contribute to the (6S)-5,6,7,8-tetrahydrofolate site. Lys-230 is modified (N6-(pyridoxal phosphate)lysine). A (6S)-5,6,7,8-tetrahydrofolate-binding site is contributed by 355–357 (SPF).

It belongs to the SHMT family. In terms of assembly, homodimer. Pyridoxal 5'-phosphate serves as cofactor.

It is found in the cytoplasm. The enzyme catalyses (6R)-5,10-methylene-5,6,7,8-tetrahydrofolate + glycine + H2O = (6S)-5,6,7,8-tetrahydrofolate + L-serine. It functions in the pathway one-carbon metabolism; tetrahydrofolate interconversion. Its pathway is amino-acid biosynthesis; glycine biosynthesis; glycine from L-serine: step 1/1. Its function is as follows. Catalyzes the reversible interconversion of serine and glycine with tetrahydrofolate (THF) serving as the one-carbon carrier. This reaction serves as the major source of one-carbon groups required for the biosynthesis of purines, thymidylate, methionine, and other important biomolecules. Also exhibits THF-independent aldolase activity toward beta-hydroxyamino acids, producing glycine and aldehydes, via a retro-aldol mechanism. The polypeptide is Serine hydroxymethyltransferase 2 (Pseudomonas savastanoi pv. phaseolicola (strain 1448A / Race 6) (Pseudomonas syringae pv. phaseolicola (strain 1448A / Race 6))).